Consider the following 179-residue polypeptide: Large ribosomal subunit protein uL5 (179 aa).

This sequence belongs to the universal ribosomal protein uL5 family. Part of the 50S ribosomal subunit; part of the 5S rRNA/L5/L18/L25 subcomplex. Contacts the 5S rRNA and the P site tRNA. Forms a bridge to the 30S subunit in the 70S ribosome.

Functionally, this is one of the proteins that bind and probably mediate the attachment of the 5S RNA into the large ribosomal subunit, where it forms part of the central protuberance. In the 70S ribosome it contacts protein S13 of the 30S subunit (bridge B1b), connecting the 2 subunits; this bridge is implicated in subunit movement. Contacts the P site tRNA; the 5S rRNA and some of its associated proteins might help stabilize positioning of ribosome-bound tRNAs. This chain is Large ribosomal subunit protein uL5, found in Clostridium botulinum (strain Alaska E43 / Type E3).